The chain runs to 179 residues: Large ribosomal subunit protein uL10 (179 aa).

This sequence belongs to the universal ribosomal protein uL10 family. In terms of assembly, part of the ribosomal stalk of the 50S ribosomal subunit. The N-terminus interacts with L11 and the large rRNA to form the base of the stalk. The C-terminus forms an elongated spine to which L12 dimers bind in a sequential fashion forming a multimeric L10(L12)X complex.

Its function is as follows. Forms part of the ribosomal stalk, playing a central role in the interaction of the ribosome with GTP-bound translation factors. The protein is Large ribosomal subunit protein uL10 of Polynucleobacter necessarius subsp. necessarius (strain STIR1).